The primary structure comprises 172 residues: UPF0102 protein Pcryo_2198 (172 aa).

It belongs to the UPF0102 family.

The chain is UPF0102 protein Pcryo_2198 from Psychrobacter cryohalolentis (strain ATCC BAA-1226 / DSM 17306 / VKM B-2378 / K5).